A 306-amino-acid polypeptide reads, in one-letter code: Acetylglutamate kinase (306 aa).

Residues glycine 75–glycine 76, arginine 97, and asparagine 197 each bind substrate.

Belongs to the acetylglutamate kinase family. ArgB subfamily.

It is found in the cytoplasm. The enzyme catalyses N-acetyl-L-glutamate + ATP = N-acetyl-L-glutamyl 5-phosphate + ADP. It participates in amino-acid biosynthesis; L-arginine biosynthesis; N(2)-acetyl-L-ornithine from L-glutamate: step 2/4. In terms of biological role, catalyzes the ATP-dependent phosphorylation of N-acetyl-L-glutamate. The chain is Acetylglutamate kinase from Streptomyces coelicolor (strain ATCC BAA-471 / A3(2) / M145).